Reading from the N-terminus, the 1026-residue chain is RecBCD enzyme subunit RecB (1026 aa).

Residues methionine 1 to threonine 438 enclose the UvrD-like helicase ATP-binding domain. Residues methionine 1–histidine 766 are DNA-binding and helicase activity, interacts with RecC. Residue alanine 21–threonine 28 coordinates ATP. The 249-residue stretch at proline 452–glycine 700 folds into the UvrD-like helicase C-terminal domain. The nuclease activity, interacts with RecD and RecA stretch occupies residues serine 815–proline 1026. Positions 854, 940, and 953 each coordinate Mg(2+). Residue aspartate 953 is the For nuclease activity of the active site.

It belongs to the helicase family. UvrD subfamily. In terms of assembly, heterotrimer of RecB, RecC and RecD. All subunits contribute to DNA-binding. Interacts with RecA. Mg(2+) is required as a cofactor.

It catalyses the reaction Exonucleolytic cleavage (in the presence of ATP) in either 5'- to 3'- or 3'- to 5'-direction to yield 5'-phosphooligonucleotides.. The catalysed reaction is Couples ATP hydrolysis with the unwinding of duplex DNA by translocating in the 3'-5' direction.. The enzyme catalyses ATP + H2O = ADP + phosphate + H(+). Its function is as follows. A helicase/nuclease that prepares dsDNA breaks (DSB) for recombinational DNA repair. Binds to DSBs and unwinds DNA via a highly rapid and processive ATP-dependent bidirectional helicase activity. Unwinds dsDNA until it encounters a Chi (crossover hotspot instigator) sequence from the 3' direction. Cuts ssDNA a few nucleotides 3' to the Chi site. The properties and activities of the enzyme are changed at Chi. The Chi-altered holoenzyme produces a long 3'-ssDNA overhang and facilitates RecA-binding to the ssDNA for homologous DNA recombination and repair. Holoenzyme degrades any linearized DNA that is unable to undergo homologous recombination. In the holoenzyme this subunit contributes ATPase, 3'-5' helicase, exonuclease activity and loads RecA onto ssDNA. The protein is RecBCD enzyme subunit RecB of Chlamydia muridarum (strain MoPn / Nigg).